Here is a 344-residue protein sequence, read N- to C-terminus: Heat-inducible transcription repressor HrcA (344 aa).

It belongs to the HrcA family.

Its function is as follows. Negative regulator of class I heat shock genes (grpE-dnaK-dnaJ and groELS operons). Prevents heat-shock induction of these operons. This Anoxybacillus flavithermus (strain DSM 21510 / WK1) protein is Heat-inducible transcription repressor HrcA.